We begin with the raw amino-acid sequence, 332 residues long: uncharacterized protein (332 aa).

Positions 1-23 are cleaved as a signal peptide; that stretch reads MKRIPSLIIGLLLILATWHSVLA. The helical transmembrane segment at 231–251 threads the bilayer; it reads SFFLGMIVTLIILAPVILYLW.

Its subcellular location is the membrane. This is an uncharacterized protein from Pyrococcus horikoshii (strain ATCC 700860 / DSM 12428 / JCM 9974 / NBRC 100139 / OT-3).